Consider the following 240-residue polypeptide: Uridylate kinase (240 aa).

Residue 13–16 (KASG) participates in ATP binding. Residues 21-26 (GSQGFG) are involved in allosteric activation by GTP. Residue glycine 55 participates in UMP binding. Residues glycine 56 and arginine 60 each coordinate ATP. UMP is bound by residues aspartate 75 and 136–143 (TGNPFFTT). ATP is bound by residues threonine 163, glutamine 164, tyrosine 169, and aspartate 172.

It belongs to the UMP kinase family. In terms of assembly, homohexamer.

It localises to the cytoplasm. The enzyme catalyses UMP + ATP = UDP + ADP. Its pathway is pyrimidine metabolism; CTP biosynthesis via de novo pathway; UDP from UMP (UMPK route): step 1/1. With respect to regulation, allosterically activated by GTP. Inhibited by UTP. Its function is as follows. Catalyzes the reversible phosphorylation of UMP to UDP. In Brucella anthropi (strain ATCC 49188 / DSM 6882 / CCUG 24695 / JCM 21032 / LMG 3331 / NBRC 15819 / NCTC 12168 / Alc 37) (Ochrobactrum anthropi), this protein is Uridylate kinase.